The chain runs to 1244 residues: Membrane-associated phosphatidylinositol transfer protein 1 (1244 aa).

Residue Thr59 is modified to Phosphothreonine. Disordered stretches follow at residues 258–331 (KCNT…QSLS) and 339–358 (ARDS…EGFS). Thr287 is modified (phosphothreonine; by CDK1). Residues 299 to 319 (ASPDASFGKQWSSSSRSSYSS) show a composition bias toward low complexity. A phosphoserine mark is found at Ser300, Ser304, Ser319, Ser326, Ser329, Ser342, Ser345, Ser346, and Ser373. Ser382 carries the post-translational modification Phosphoserine; by CDK1. The tract at residues 581 to 682 (AGTGSRGSSR…SSEAPDGPSS (102 aa)) is disordered. Phosphoserine occurs at positions 593, 600, and 621. Polar residues predominate over residues 643-658 (GSQNSLQAAPATTSSW). Residues 686–880 (LDFKVSGFFL…VAFILRQVIE (195 aa)) enclose the DDHD domain. Position 896 is a phosphoserine (Ser896). Residues 1206–1244 (QLLRSRGPSQAEREGPGTPPTTLARGKARSISLKLDSEE) form a disordered region. 2 positions are modified to omega-N-methylarginine: Arg1211 and Arg1218. Ser1237 bears the Phosphoserine mark.

This sequence belongs to the PtdIns transfer protein family. PI transfer class IIA subfamily. In terms of assembly, interacts with PIK4CA. Interacts with PTK2B via its C-terminus. Interacts with RHOA. Has higher affinity for the inactive, GDP-bound form of RHOA. The CDK1-phosphorylated form interacts with PLK1. Interacts with VAPB. Phosphorylated on multiple sites by CDK1 at the onset of mitosis. Phosphorylation facilitates dissociation from the Golgi complex and is required for interaction with PLK1. Post-translationally, phosphorylated on threonine residues upon treatment with oleic acid. In terms of processing, phosphorylated on tyrosine residues by PTK2B. Ubiquitous.

The protein resides in the cytoplasm. It is found in the golgi apparatus. It localises to the golgi stack membrane. The protein localises to the endoplasmic reticulum membrane. Its subcellular location is the lipid droplet. The protein resides in the cleavage furrow. It is found in the midbody. The enzyme catalyses a 1,2-diacyl-sn-glycero-3-phospho-(1D-myo-inositol)(in) = a 1,2-diacyl-sn-glycero-3-phospho-(1D-myo-inositol)(out). In terms of biological role, catalyzes the transfer of phosphatidylinositol (PI) between membranes. Binds PI, phosphatidylcholine (PC) and phosphatidic acid (PA) with the binding affinity order of PI &gt; PA &gt; PC. Regulates RHOA activity, and plays a role in cytoskeleton remodeling. Necessary for normal completion of cytokinesis. Plays a role in maintaining normal diacylglycerol levels in the Golgi apparatus. Necessary for maintaining the normal structure of the endoplasmic reticulum and the Golgi apparatus. Required for protein export from the endoplasmic reticulum and the Golgi. Binds calcium ions. This chain is Membrane-associated phosphatidylinositol transfer protein 1 (PITPNM1), found in Homo sapiens (Human).